A 477-amino-acid chain; its full sequence is MSLTIAVVGRPNVGKSTLFNRLVGQKLALVCDKPGVTRDRRIHAAELQDLCFDVIDTAGLEEAGDHTLEGRMCSHTKAAINEADLILFMFDAKSGITPSDLNFASLVRKSGKPIVLVANKSESKAAVGVEYEAWSLGLGEPCPISAEHGLGLSDLRDAIMDAIGKERVFESKNAEKCVSVQSASVGDYVDDLEEKGSVCDESKQPLRIAVAGRPNTGKSTLINRMLGQDRLLTGPEAGLTRDSISVDWEWRGRHIKLFDTAGLRRKSKIQEKLEKLSVADTLRAIRFAEVVVIVFDATAPFEKQDLQIADLVIREGRVPIIAFNKWDLIENNSQVTLANLHEKCAHLLPQVPGLRAVPLSGQYGQGIDNLMENVMMMHRMWNRRISTAKLNRWLETIVAHHPPPAIFGRRLKVKYITQVKTRPPGFVISCSRPKTMPQSYLRYLSNGLRNTFDMPGVPIRISLRASDNPFAARSKKK.

EngA-type G domains follow at residues 3–167 (LTIA…GKER) and 206–382 (LRIA…RMWN). Residues 9–16 (GRPNVGKS), 56–60 (DTAGL), 119–122 (NKSE), 212–219 (GRPNTGKS), 259–263 (DTAGL), and 324–327 (NKWD) contribute to the GTP site. The 85-residue stretch at 383–467 (RRISTAKLNR…PIRISLRASD (85 aa)) folds into the KH-like domain.

This sequence belongs to the TRAFAC class TrmE-Era-EngA-EngB-Septin-like GTPase superfamily. EngA (Der) GTPase family. In terms of assembly, associates with the 50S ribosomal subunit.

Functionally, GTPase that plays an essential role in the late steps of ribosome biogenesis. The chain is GTPase Der from Bartonella quintana (strain Toulouse) (Rochalimaea quintana).